The following is a 572-amino-acid chain: Potassium-transporting ATPase potassium-binding subunit (572 aa).

A run of 10 helical transmembrane segments spans residues 6 to 26 (ILFV…GTYI), 66 to 86 (FFSL…VLLL), 135 to 155 (ALAV…IVLI), 177 to 197 (IFWI…FQGV), 251 to 271 (TIIT…ALTY), 283 to 303 (GWMI…VMTI), 382 to 402 (IFGG…LAVF), 428 to 448 (MFAL…AAVI), 493 to 513 (ITIA…VMML), and 537 to 557 (FIFS…TIFP).

This sequence belongs to the KdpA family. As to quaternary structure, the system is composed of three essential subunits: KdpA, KdpB and KdpC.

The protein resides in the cell inner membrane. Its function is as follows. Part of the high-affinity ATP-driven potassium transport (or Kdp) system, which catalyzes the hydrolysis of ATP coupled with the electrogenic transport of potassium into the cytoplasm. This subunit binds the periplasmic potassium ions and delivers the ions to the membrane domain of KdpB through an intramembrane tunnel. This chain is Potassium-transporting ATPase potassium-binding subunit, found in Francisella philomiragia subsp. philomiragia (strain ATCC 25017 / CCUG 19701 / FSC 153 / O#319-036).